A 317-amino-acid chain; its full sequence is Protoheme IX farnesyltransferase (317 aa).

Helical transmembrane passes span 28-48, 53-73, 101-121, 122-142, 150-170, 178-198, 223-243, 246-266, and 282-302; these read IIPLLLITTAASMWIASHGHI, LLITLLGGTLAAASAQTLNCI, LIFALILGSLSFSLLMVFVNL, LSACLALSGIVFYMLVYTHWL, IVIGGAAGSIPPLVGWAAVTG, ILFALIFLWTPPHFWALALMI, IWIYTLIVVPFSLLLVFPFQA, LFYAIAALVLGAIFIQKAWEL, and YSILYMMLLCTAMVVDSLPAV.

The protein belongs to the UbiA prenyltransferase family. Protoheme IX farnesyltransferase subfamily.

The protein localises to the cell inner membrane. The enzyme catalyses heme b + (2E,6E)-farnesyl diphosphate + H2O = Fe(II)-heme o + diphosphate. The protein operates within porphyrin-containing compound metabolism; heme O biosynthesis; heme O from protoheme: step 1/1. Its function is as follows. Converts heme B (protoheme IX) to heme O by substitution of the vinyl group on carbon 2 of heme B porphyrin ring with a hydroxyethyl farnesyl side group. The protein is Protoheme IX farnesyltransferase of Picosynechococcus sp. (strain ATCC 27264 / PCC 7002 / PR-6) (Agmenellum quadruplicatum).